We begin with the raw amino-acid sequence, 126 residues long: Protein Wnt-7(II) (126 aa).

The O-palmitoleoyl serine; by PORCN moiety is linked to residue Ser1. Cys92 and Cys107 are disulfide-bonded. N-linked (GlcNAc...) asparagine glycosylation occurs at Asn93.

The protein belongs to the Wnt family. Palmitoleoylation is required for efficient binding to frizzled receptors. Depalmitoleoylation leads to Wnt signaling pathway inhibition.

It is found in the secreted. The protein resides in the extracellular space. It localises to the extracellular matrix. Its function is as follows. Ligand for members of the frizzled family of seven transmembrane receptors. Probable developmental protein. May be a signaling molecule which affects the development of discrete regions of tissues. Is likely to signal over only few cell diameters. This chain is Protein Wnt-7(II) (WNT-7(II)), found in Eptatretus stoutii (Pacific hagfish).